A 172-amino-acid polypeptide reads, in one-letter code: Adenine phosphoribosyltransferase (172 aa).

This sequence belongs to the purine/pyrimidine phosphoribosyltransferase family. Homodimer.

The protein resides in the cytoplasm. It catalyses the reaction AMP + diphosphate = 5-phospho-alpha-D-ribose 1-diphosphate + adenine. Its pathway is purine metabolism; AMP biosynthesis via salvage pathway; AMP from adenine: step 1/1. In terms of biological role, catalyzes a salvage reaction resulting in the formation of AMP, that is energically less costly than de novo synthesis. The polypeptide is Adenine phosphoribosyltransferase (Prochlorococcus marinus (strain MIT 9313)).